Reading from the N-terminus, the 697-residue chain is Semaphorin-2A (697 aa).

The N-terminal stretch at 1 to 20 (MAAKLWNLLLVAASVHLVGS) is a signal peptide. The Sema domain occupies 21–493 (VEQLHQDLIH…SDNIVRQIEL (473 aa)). Asparagine 63 and asparagine 66 each carry an N-linked (GlcNAc...) asparagine glycan. A disulfide bond links cysteine 87 and cysteine 98. Asparagine 132, asparagine 198, and asparagine 283 each carry an N-linked (GlcNAc...) asparagine glycan. Cystine bridges form between cysteine 260–cysteine 367 and cysteine 284–cysteine 326. Asparagine 369 is a glycosylation site (N-linked (GlcNAc...) asparagine). 2 disulfide bridges follow: cysteine 496–cysteine 512 and cysteine 506–cysteine 521. One can recognise an Ig-like C2-type domain in the interval 526 to 634 (PGLLQDVTNT…LCSYNITVDA (109 aa)). 3 N-linked (GlcNAc...) asparagine glycosylation sites follow: asparagine 534, asparagine 629, and asparagine 679. An intrachain disulfide couples cysteine 618 to cysteine 654. Positions 673–685 (QCSTKQNNSNQKT) are enriched in polar residues. The tract at residues 673–697 (QCSTKQNNSNQKTHPNDIFHSNPVA) is disordered.

The protein belongs to the semaphorin family. Expressed in a gradient in the developing limb bud epithelium during Ti pioneer axon outgrowth.

It is found in the secreted. Its function is as follows. Acts as a chemorepulsive guidance molecule critical for axon fasciculation and for determining both the initial direction and subsequent pathfinding events of the Ti axon projection. The protein is Semaphorin-2A (SEMA-2A) of Schistocerca gregaria (Desert locust).